The following is a 488-amino-acid chain: TOX high mobility group box family member 2 (488 aa).

Residues 76 to 114 are required for transcriptional activation; the sequence is YEIPPITPPNLPEPSLLHLGDHEASYHSLCHGLTPNGLL. Disordered stretches follow at residues 192-258, 293-328, and 363-473; these read RSSI…PQKP, WDSLGEEQKQSSPDQGETKSTQANPPAKMLPPKQPM, and SLLP…ECGI. Residues 204–216 show a composition bias toward low complexity; that stretch reads GSKSATPSPSSST. Residues 222–239 show a composition bias toward basic and acidic residues; sequence EVHFKISGEKRPSADPGK. Residues 223–252 carry the Nuclear localization signal motif; sequence VHFKISGEKRPSADPGKKAKNPKKKKKKDP. Residues 240 to 250 show a composition bias toward basic residues; sequence KAKNPKKKKKK. A DNA-binding region (HMG box) is located at residues 255-323; the sequence is PQKPVSAYAL…QANPPAKMLP (69 aa). Polar residues predominate over residues 302 to 316; sequence QSSPDQGETKSTQAN. A compositionally biased stretch (low complexity) spans 443–460; sequence PSSSGSCSPGPSNPTSSG.

Its subcellular location is the nucleus. Functionally, putative transcriptional activator involved in the hypothalamo-pituitary-gonadal system. This Homo sapiens (Human) protein is TOX high mobility group box family member 2 (TOX2).